Here is a 39-residue protein sequence, read N- to C-terminus: Cytochrome b6-f complex subunit 5 (39 aa).

The chain crosses the membrane as a helical span at residues 5–25 (LLCGIVLGLVPITLLGLFVAA).

This sequence belongs to the PetG family. As to quaternary structure, the 4 large subunits of the cytochrome b6-f complex are cytochrome b6, subunit IV (17 kDa polypeptide, PetD), cytochrome f and the Rieske protein, while the 4 small subunits are PetG, PetL, PetM and PetN. The complex functions as a dimer.

The protein localises to the cellular thylakoid membrane. Its function is as follows. Component of the cytochrome b6-f complex, which mediates electron transfer between photosystem II (PSII) and photosystem I (PSI), cyclic electron flow around PSI, and state transitions. PetG is required for either the stability or assembly of the cytochrome b6-f complex. This Prochlorococcus marinus (strain SARG / CCMP1375 / SS120) protein is Cytochrome b6-f complex subunit 5.